Consider the following 239-residue polypeptide: ATP synthase subunit b (239 aa).

Residues 1-22 (MYAQEAQQKPEAQQSAPAAEQP) show a composition bias toward low complexity. Residues 1 to 64 (MYAQEAQQKP…GEEEAGEHME (64 aa)) are disordered. Basic and acidic residues-rich tracts occupy residues 23-33 (KPAEEQAKPEQ) and 45-64 (ELSEASHAAEGEEEAGEHME). A helical transmembrane segment spans residues 85 to 105 (SYWIAMAFNFAIVFALLGWAM).

The protein belongs to the ATPase B chain family. As to quaternary structure, F-type ATPases have 2 components, F(1) - the catalytic core - and F(0) - the membrane proton channel. F(1) has five subunits: alpha(3), beta(3), gamma(1), delta(1), epsilon(1). F(0) has three main subunits: a(1), b(2) and c(10-14). The alpha and beta chains form an alternating ring which encloses part of the gamma chain. F(1) is attached to F(0) by a central stalk formed by the gamma and epsilon chains, while a peripheral stalk is formed by the delta and b chains.

The protein localises to the cell inner membrane. F(1)F(0) ATP synthase produces ATP from ADP in the presence of a proton or sodium gradient. F-type ATPases consist of two structural domains, F(1) containing the extramembraneous catalytic core and F(0) containing the membrane proton channel, linked together by a central stalk and a peripheral stalk. During catalysis, ATP synthesis in the catalytic domain of F(1) is coupled via a rotary mechanism of the central stalk subunits to proton translocation. Its function is as follows. Component of the F(0) channel, it forms part of the peripheral stalk, linking F(1) to F(0). This Koribacter versatilis (strain Ellin345) protein is ATP synthase subunit b.